The primary structure comprises 1150 residues: ATP-dependent DNA helicase Q-like 4B (1150 aa).

2 disordered regions span residues 124–143 (TPAI…GSTF) and 154–179 (CAHN…FSSS). Residues 132 to 142 (TSRTSSTKGST) are compositionally biased toward low complexity. Positions 327-361 (DHVEQLHQKRLLLKKQIQQLEILIHNKERKKSQCL) form a coiled coil. Over residues 416-428 (YDISSGSEEREQS) the composition is skewed to basic and acidic residues. A disordered region spans residues 416 to 446 (YDISSGSEEREQSVSEVIDVTDTESSNDKKW). The Helicase ATP-binding domain maps to 478 to 653 (INATMSGCDV…VQALGLVNCV (176 aa)). ATP is bound at residue 491-498 (MPTGGGKS). Residues 597–600 (DEAH) carry the DEAH box motif. In terms of domain architecture, Helicase C-terminal spans 678–823 (DIDKFIRENH…QMKMGYNCKA (146 aa)). In terms of domain architecture, HRDC spans 1029–1111 (SNLSGILLTA…DSTINDHYKT (83 aa)). The segment at 1106-1150 (NDHYKTRPGSGKRRRDENVNPNVAEDDDPDWSASQSHKKVVKNKK) is disordered. Residues 1141–1150 (SHKKVVKNKK) are compositionally biased toward basic residues.

Belongs to the helicase family. RecQ subfamily. It depends on Mg(2+) as a cofactor. Mn(2+) is required as a cofactor. In terms of tissue distribution, mostly expressed in roots, seedlings, shoots, shoot apical mersitem, flowers, and siliques.

Its subcellular location is the nucleus. It catalyses the reaction Couples ATP hydrolysis with the unwinding of duplex DNA by translocating in the 3'-5' direction.. It carries out the reaction ATP + H2O = ADP + phosphate + H(+). Its function is as follows. 3'-5' DNA helicase that may play a role in the repair of DNA. Required to promote but not to suppress crossovers. This is ATP-dependent DNA helicase Q-like 4B (RECQL4B) from Arabidopsis thaliana (Mouse-ear cress).